The primary structure comprises 140 residues: MSHLNIANLGEDFVAQWLQSTGWIILHRQFSCRWGEIDIIAQHTRNNQESILAFVEVKTRSPGNWDDGGRGAITLKKQAKIERTAKIFLAKYPDKAEYICRFDVAIVAYQGISQQDHAAIGEYKFQLQEYIPAAFDCLIY.

Belongs to the UPF0102 family.

In Nostoc sp. (strain PCC 7120 / SAG 25.82 / UTEX 2576), this protein is UPF0102 protein alr1796.